Reading from the N-terminus, the 363-residue chain is Des-methyl DIF-1 methyltransferase A (363 aa).

The S-adenosyl-L-methionine site is built by G195, D221, D250, L251, and K266. The Proton acceptor role is filled by H270.

This sequence belongs to the class I-like SAM-binding methyltransferase superfamily. Cation-independent O-methyltransferase family. COMT subfamily.

It carries out the reaction (3,5-dichloro-2,4,6-trihydroxyphenyl)hexan-1-one + S-adenosyl-L-methionine = 1-(3,5-dichloro-2,6-dihydroxy-4-methoxyphenyl)hexan-1-one + S-adenosyl-L-homocysteine + H(+). Functionally, O-methyltransferase; part of the gene cluster that mediates the biosynthesis of DIF-1 (Differentiation Inducing Factor-1), a signal molecule involved in the differentiation of pstO (prestalk-O) cells. The three-step process begins with the formation of (2,4,6-trihydroxyphenyl)-1-hexan-1-one (THPH) by the polyketide synthase StlB. THPH is then dichlorinated by the flavin-dependent halogenase ChlA. The last step of DIF-1 biosynthesis is the O-methylation of dichloro-THPH (or des-methyl-DIF-1) by the methyltransferase DmtA to yield DIF-1. The polypeptide is Des-methyl DIF-1 methyltransferase A (Dictyostelium discoideum (Social amoeba)).